The primary structure comprises 334 residues: Phosphate acyltransferase (334 aa).

It belongs to the PlsX family. In terms of assembly, homodimer. Probably interacts with PlsY.

Its subcellular location is the cytoplasm. The enzyme catalyses a fatty acyl-[ACP] + phosphate = an acyl phosphate + holo-[ACP]. It participates in lipid metabolism; phospholipid metabolism. Catalyzes the reversible formation of acyl-phosphate (acyl-PO(4)) from acyl-[acyl-carrier-protein] (acyl-ACP). This enzyme utilizes acyl-ACP as fatty acyl donor, but not acyl-CoA. The chain is Phosphate acyltransferase from Halothermothrix orenii (strain H 168 / OCM 544 / DSM 9562).